Here is a 127-residue protein sequence, read N- to C-terminus: Ribonuclease P protein component (127 aa).

The protein belongs to the RnpA family. Consists of a catalytic RNA component (M1 or rnpB) and a protein subunit.

It carries out the reaction Endonucleolytic cleavage of RNA, removing 5'-extranucleotides from tRNA precursor.. In terms of biological role, RNaseP catalyzes the removal of the 5'-leader sequence from pre-tRNA to produce the mature 5'-terminus. It can also cleave other RNA substrates such as 4.5S RNA. The protein component plays an auxiliary but essential role in vivo by binding to the 5'-leader sequence and broadening the substrate specificity of the ribozyme. In Rippkaea orientalis (strain PCC 8801 / RF-1) (Cyanothece sp. (strain PCC 8801)), this protein is Ribonuclease P protein component.